Reading from the N-terminus, the 264-residue chain is S-adenosylmethionine decarboxylase proenzyme (264 aa).

Serine 112 serves as the catalytic Schiff-base intermediate with substrate; via pyruvic acid. Position 112 is a pyruvic acid (Ser); by autocatalysis (serine 112). Histidine 117 serves as the catalytic Proton acceptor; for processing activity. Residue cysteine 140 is the Proton donor; for catalytic activity of the active site.

Belongs to the prokaryotic AdoMetDC family. Type 2 subfamily. As to quaternary structure, heterooctamer of four alpha and four beta chains arranged as a tetramer of alpha/beta heterodimers. Requires pyruvate as cofactor. Is synthesized initially as an inactive proenzyme. Formation of the active enzyme involves a self-maturation process in which the active site pyruvoyl group is generated from an internal serine residue via an autocatalytic post-translational modification. Two non-identical subunits are generated from the proenzyme in this reaction, and the pyruvate is formed at the N-terminus of the alpha chain, which is derived from the carboxyl end of the proenzyme. The post-translation cleavage follows an unusual pathway, termed non-hydrolytic serinolysis, in which the side chain hydroxyl group of the serine supplies its oxygen atom to form the C-terminus of the beta chain, while the remainder of the serine residue undergoes an oxidative deamination to produce ammonia and the pyruvoyl group blocking the N-terminus of the alpha chain.

It carries out the reaction S-adenosyl-L-methionine + H(+) = S-adenosyl 3-(methylsulfanyl)propylamine + CO2. It participates in amine and polyamine biosynthesis; S-adenosylmethioninamine biosynthesis; S-adenosylmethioninamine from S-adenosyl-L-methionine: step 1/1. In terms of biological role, catalyzes the decarboxylation of S-adenosylmethionine to S-adenosylmethioninamine (dcAdoMet), the propylamine donor required for the synthesis of the polyamines spermine and spermidine from the diamine putrescine. This is S-adenosylmethionine decarboxylase proenzyme from Klebsiella pneumoniae (strain 342).